Consider the following 56-residue polypeptide: Large ribosomal subunit protein bL33 (56 aa).

This sequence belongs to the bacterial ribosomal protein bL33 family.

In Beutenbergia cavernae (strain ATCC BAA-8 / DSM 12333 / CCUG 43141 / JCM 11478 / NBRC 16432 / NCIMB 13614 / HKI 0122), this protein is Large ribosomal subunit protein bL33.